The following is a 510-amino-acid chain: NAD(P)H-quinone oxidoreductase subunit 2, chloroplastic (510 aa).

Transmembrane regions (helical) follow at residues 24 to 44 (LLLFHGSFIFPECILIFGLIL), 59 to 79 (WFYFISSTSLVMSITALFFRW), 99 to 119 (IFQFLILLCSTLCIPLSVEYI), 124 to 144 (MAITEFLLFVLTATLGGMFLC), 149 to 169 (LITIFVAPECFSLCSYLLSGY), 184 to 204 (LLMGGASSSILVHGLSWLYGL), 229 to 249 (ISIALISITVGIGFKLSPAPF), 295 to 315 (WHLLLEILAILSMILGNLIAL), 323 to 343 (MLAYSSIGQIGYVIIGIIVGD), 354 to 374 (YMLFYISMNLGTFACIVSFGL), 395 to 415 (ALSSALCLLSLGGLPPLAGFF), and 418 to 438 (LYLFWCGWQAGLYFLVSIGLL).

This sequence belongs to the complex I subunit 2 family. As to quaternary structure, NDH is composed of at least 16 different subunits, 5 of which are encoded in the nucleus.

The protein resides in the plastid. Its subcellular location is the chloroplast thylakoid membrane. The enzyme catalyses a plastoquinone + NADH + (n+1) H(+)(in) = a plastoquinol + NAD(+) + n H(+)(out). It carries out the reaction a plastoquinone + NADPH + (n+1) H(+)(in) = a plastoquinol + NADP(+) + n H(+)(out). In terms of biological role, NDH shuttles electrons from NAD(P)H:plastoquinone, via FMN and iron-sulfur (Fe-S) centers, to quinones in the photosynthetic chain and possibly in a chloroplast respiratory chain. The immediate electron acceptor for the enzyme in this species is believed to be plastoquinone. Couples the redox reaction to proton translocation, and thus conserves the redox energy in a proton gradient. In Coelogyne cristata (Orchid), this protein is NAD(P)H-quinone oxidoreductase subunit 2, chloroplastic.